Consider the following 332-residue polypeptide: UDP-N-acetylenolpyruvoylglucosamine reductase (332 aa).

The FAD-binding PCMH-type domain maps to 15–184; sequence IDVSAACFLE…TYVSFRLSKR (170 aa). Arginine 160 is a catalytic residue. Serine 232 (proton donor) is an active-site residue. Glutamate 328 is a catalytic residue.

It belongs to the MurB family. FAD serves as cofactor.

It localises to the cytoplasm. The catalysed reaction is UDP-N-acetyl-alpha-D-muramate + NADP(+) = UDP-N-acetyl-3-O-(1-carboxyvinyl)-alpha-D-glucosamine + NADPH + H(+). The protein operates within cell wall biogenesis; peptidoglycan biosynthesis. Functionally, cell wall formation. The chain is UDP-N-acetylenolpyruvoylglucosamine reductase from Bacteroides fragilis (strain YCH46).